We begin with the raw amino-acid sequence, 77 residues long: UPF0248 protein Pcal_0252 (77 aa).

This sequence belongs to the UPF0248 family.

The chain is UPF0248 protein Pcal_0252 from Pyrobaculum calidifontis (strain DSM 21063 / JCM 11548 / VA1).